A 173-amino-acid polypeptide reads, in one-letter code: Ferric citrate uptake sigma factor FecI (173 aa).

Positions 40-52 (DIAQDTFLRVMVS) match the Polymerase core binding motif. Residues 139-158 (YSEIAHKLGVSISSVKKYVA) constitute a DNA-binding region (H-T-H motif).

The protein belongs to the sigma-70 factor family. ECF subfamily. In terms of assembly, interacts with FecR (via cytoplasmic N-terminus).

In terms of biological role, sigma factors are initiation factors that promote the attachment of RNA polymerase to specific initiation sites and are then released. This sigma factor regulates transcriptional activation of the fecABCDE operon which mediates ferric citrate transport. This is Ferric citrate uptake sigma factor FecI (fecI) from Escherichia coli (strain K12).